The chain runs to 988 residues: MAEAFLQVLLENLTSFIGDKLVLIFGFEKECEKLSSVFSTIQAVLQDAQEKQLKDKAIENWLQKLNSAAYEVDDILGECKNEAIRFEQSRLGFYHPGIINFRHKIGRRMKEIMEKLDAISEERRKFHFLEKITERQAAAATRETGFVLTEPKVYGRDKEEDEIVKILINNVNVAEELPVFPIIGMGGLGKTTLAQMIFNDERVTKHFNPKIWVCVSDDFDEKRLIKTIIGNIERSSPHVEDLASFQKKLQELLNGKRYLLVLDDVWNDDLEKWAKLRAVLTVGARGASILATTRLEKVGSIMGTLQPYHLSNLSPHDSLLLFMQRAFGQQKEANPNLVAIGKEIVKKCGGVPLAAKTLGGLLRFKREESEWEHVRDNEIWSLPQDESSILPALRLSYHHLPLDLRQCFAYCAVFPKDTKMIKENLITLWMAHGFLLSKGNLELEDVGNEVWNELYLRSFFQEIEAKSGNTYFKIHDLIHDLATSLFSASASCGNIREINVKDYKHTVSIGFAAVVSSYSPSLLKKFVSLRVLNLSYSKLEQLPSSIGDLLHLRYLDLSCNNFRSLPERLCKLQNLQTLDVHNCYSLNCLPKQTSKLSSLRHLVVDGCPLTSTPPRIGLLTCLKTLGFFIVGSKKGYQLGELKNLNLCGSISITHLERVKNDTDAEANLSAKANLQSLSMSWDNDGPNRYESKEVKVLEALKPHPNLKYLEIIAFGGFRFPSWINHSVLEKVISVRIKSCKNCLCLPPFGELPCLENLELQNGSAEVEYVEEDDVHSRFSTRRSFPSLKKLRIWFFRSLKGLMKEEGEEKFPMLEEMAILYCPLFVFPTLSSVKKLEVHGNTNTRGLSSISNLSTLTSLRIGANYRATSLPEEMFTSLTNLEFLSFFDFKNLKDLPTSLTSLNALKRLQIESCDSLESFPEQGLEGLTSLTQLFVKYCKMLKCLPEGLQHLTALTNLGVSGCPEVEKRCDKEIGEDWHKIAHIPNLDIH.

Residues 137–439 enclose the NB-ARC domain; it reads AAAATRETGF…MAHGFLLSKG (303 aa). 184–191 is a binding site for ATP; sequence GMGGLGKT. 14 LRR repeats span residues 526–548, 549–572, 574–595, 596–620, 638–662, 674–696, 751–776, 784–808, 829–851, 852–876, 878–900, 901–925, 927–950, and 966–988; these read FVSLRVLNLSYSKLEQLPSSIGD, LLHLRYLDLSCNNFRSLPERLCKL, NLQTLDVHNCYSLNCLPKQTSK, LSSLRHLVVDGCPLTSTPPRIGLLT, LGELKNLNLCGSISITHLERVKNDT, LQSLSMSWDNDGPNRYESKEVKV, LPCLENLELQNGSAEVEYVEEDDVHS, FPSLKKLRIWFFRSLKGLMKEEGEE, LSSVKKLEVHGNTNTRGLSSISN, LSTLTSLRIGANYRATSLPEEMFTS, TNLEFLSFFDFKNLKDLPTSLTS, LNALKRLQIESCDSLESFPEQGLEG, TSLTQLFVKYCKMLKCLPEGLQHL, and KRCDKEIGEDWHKIAHIPNLDIH.

It belongs to the disease resistance NB-LRR family.

In terms of biological role, disease resistance protein. Resistance proteins guard the plant against pathogens that contain an appropriate avirulence protein via a direct or indirect interaction with this avirulence protein. That triggers a defense system which restricts the pathogen growth. The polypeptide is Putative disease resistance protein RGA4 (RGA4) (Solanum bulbocastanum (Wild potato)).